We begin with the raw amino-acid sequence, 371 residues long: SufE-like protein 1, chloroplastic/mitochondrial (371 aa).

A chloroplast and mitochondrion-targeting transit peptide spans 1-66; the sequence is MAAAMSSSCC…ISTGIVPPPS (66 aa). The active-site Cysteine persulfide intermediate is Cys131. Residue Cys131 is modified to S-glutathionyl cysteine. The segment at 218-249 is disordered; sequence VKGEEDSSSGESSESSFVSIPETKDEANVPEV.

The protein belongs to the SufE family. In terms of assembly, heterotetramer with NFS2. Interacts with NFS2 and NIFS1. Interacts in vitro with GRXS14, GRXS15, GRXS16 and GRXS17, but not with GRXC5. Interacts in vivo only with GRXS14 and GRXS16. Post-translationally, glutathionylated. Glutathionylation strongly reduces the stimulation of NFS2 activity. In terms of tissue distribution, expressed in roots, leaves, stems and flowers.

It is found in the plastid. It localises to the chloroplast stroma. Its subcellular location is the mitochondrion. The protein operates within cofactor biosynthesis; iron-sulfur cluster biosynthesis. Functionally, participates in cysteine desulfurization mediated by NFS2 in chloroplast and NIFS1 in mitochondrion. Activates the cysteine desulfurase activity of NFS2. Cysteine desulfurization mobilizes sulfur from L-cysteine to yield L-alanine and supplies the inorganic sulfur for iron-sulfur (Fe-S) cluster formation. Glutaredoxins regulate SUFE1 activity by inducing its reduction and deglutathionylation. This Arabidopsis thaliana (Mouse-ear cress) protein is SufE-like protein 1, chloroplastic/mitochondrial.